We begin with the raw amino-acid sequence, 921 residues long: Isoleucine--tRNA ligase (921 aa).

Positions 57 to 67 (PYANGELHMGH) match the 'HIGH' region motif. Residue E552 coordinates L-isoleucyl-5'-AMP. The 'KMSKS' region motif lies at 593–597 (KMSKS). An ATP-binding site is contributed by K596. Positions 888, 891, 908, and 911 each coordinate Zn(2+).

This sequence belongs to the class-I aminoacyl-tRNA synthetase family. IleS type 1 subfamily. Monomer. Zn(2+) serves as cofactor.

Its subcellular location is the cytoplasm. It catalyses the reaction tRNA(Ile) + L-isoleucine + ATP = L-isoleucyl-tRNA(Ile) + AMP + diphosphate. In terms of biological role, catalyzes the attachment of isoleucine to tRNA(Ile). As IleRS can inadvertently accommodate and process structurally similar amino acids such as valine, to avoid such errors it has two additional distinct tRNA(Ile)-dependent editing activities. One activity is designated as 'pretransfer' editing and involves the hydrolysis of activated Val-AMP. The other activity is designated 'posttransfer' editing and involves deacylation of mischarged Val-tRNA(Ile). This is Isoleucine--tRNA ligase from Listeria monocytogenes serovar 1/2a (strain ATCC BAA-679 / EGD-e).